Consider the following 323-residue polypeptide: MKSALFTRFFILLPWILIVIIMLDVDTRRPVPPLTPRPYFSPYAVGRGGARLPLRRGGPAHGTQKRNQSRPQPQPEPQLPTIYAITPTYSRPVQKAELTRLANTFRQVAQLHWILVEDAAARSELVSRFLARAGLPSTHLHVPTPRRYKRPGLPRATEQRNAGLAWLRQRHQHQRAQPGVLFFADDDNTYSLELFQEMRTTRKVSVWPVGLVGGRRYERPLVENGKVVGWYTGWRADRPFAIDMAGFAVSLQVILSNPKAVFKRRGSQPGMQESDFLKQITTVEELEPKANNCTKVLVWHTRTEKVNLANEPKYHLDTVKIEV.

At 1–2 (MK) the chain is on the cytoplasmic side. The chain crosses the membrane as a helical; Signal-anchor for type II membrane protein span at residues 3-23 (SALFTRFFILLPWILIVIIML). Over 24–323 (DVDTRRPVPP…YHLDTVKIEV (300 aa)) the chain is Lumenal. The segment at 51–80 (RLPLRRGGPAHGTQKRNQSRPQPQPEPQLP) is disordered. Residue Asn-67 is glycosylated (N-linked (GlcNAc...) asparagine). UDP-alpha-D-glucuronate-binding positions include 87–89 (PTY), Asp-118, Arg-155, Arg-160, and 185–187 (DDD). Asp-187 is a Mn(2+) binding site. The segment at 234–243 (WRADRPFAID) is interaction with galactose moiety of substrate glycoprotein. Catalysis depends on Glu-273, which acts as the Proton donor/acceptor. Asn-292 carries an N-linked (GlcNAc...) asparagine glycan. Residue 300-302 (HTR) coordinates UDP-alpha-D-glucuronate.

It belongs to the glycosyltransferase 43 family. Homodimer. The cofactor is Mn(2+). Expressed in the trachea, retina, spinal cord, hippocampus and other brain regions, and, at lower levels, in testis and ovary.

It localises to the golgi apparatus membrane. The enzyme catalyses 3-O-(beta-D-galactosyl-(1-&gt;3)-beta-D-galactosyl-(1-&gt;4)-beta-D-xylosyl)-L-seryl-[protein] + UDP-alpha-D-glucuronate = 3-O-(beta-D-GlcA-(1-&gt;3)-beta-D-Gal-(1-&gt;3)-beta-D-Gal-(1-&gt;4)-beta-D-Xyl)-L-seryl-[protein] + UDP + H(+). Its pathway is protein modification; protein glycosylation. Functionally, involved in the biosynthesis of L2/HNK-1 carbohydrate epitope on both glycolipids and glycoproteins. The polypeptide is Galactosylgalactosylxylosylprotein 3-beta-glucuronosyltransferase 2 (B3GAT2) (Homo sapiens (Human)).